Reading from the N-terminus, the 128-residue chain is C-C motif chemokine 28 (128 aa).

Positions 1-24 are cleaved as a signal peptide; sequence MQQTGLTLALVALAVCVALPSSEA. Disulfide bonds link C32-C60 and C33-C75. The interval 89 to 128 is disordered; that stretch reads EQAAKKNTKGNICHKKQAGKRKSKGAHQEKPEIHSHKSPY. The segment covering 94-113 has biased composition (basic residues); it reads KNTKGNICHKKQAGKRKSKG. Over residues 114–128 the composition is skewed to basic and acidic residues; sequence AHQEKPEIHSHKSPY.

Belongs to the intercrine beta (chemokine CC) family.

It localises to the secreted. Its function is as follows. Chemotactic activity for resting CD4, CD8 T-cells and eosinophils. Binds to CCR3 and CCR10 and induces calcium mobilization in a dose-dependent manner. The polypeptide is C-C motif chemokine 28 (CCL28) (Canis lupus familiaris (Dog)).